The following is a 628-amino-acid chain: Eukaryotic peptide chain release factor GTP-binding subunit ERF3B (628 aa).

Positions 1–10 are enriched in low complexity; that stretch reads MDSGSSSSDS. Disordered regions lie at residues 1–49, 72–124, and 146–195; these read MDSG…SAFS, FLRG…LEGS, and LEES…VIVP. The tr-type G domain occupies 201 to 425; that stretch reads KEHVNVVFIG…YLDNLPNFNR (225 aa). The interval 210–217 is G1; the sequence is GHVDAGKS. 213–218 lines the GTP pocket; that stretch reads DAGKST. The segment at 266 to 270 is G2; that stretch reads GKTVE. The interval 287 to 290 is G3; sequence DAPG. GTP-binding positions include 349-352 and 391-393; these read NKMD and SGL. The interval 349–352 is G4; sequence NKMD. Positions 391–393 are G5; sequence SGL.

This sequence belongs to the TRAFAC class translation factor GTPase superfamily. Classic translation factor GTPase family. ERF3 subfamily. As to quaternary structure, component of the eRF1-eRF3-GTP ternary complex, composed of ETF1/ERF1 and ERF3 (GSPT1/ERF3A or GSPT2/ERF3B) and GTP. Component of the transient SURF (SMG1-UPF1-eRF1-eRF3) complex. Interacts with UPF1 and PABPC1. As to expression, highly expressed in IUCC stage II colorectal cancer (CRC).

The protein resides in the cytoplasm. The catalysed reaction is GTP + H2O = GDP + phosphate + H(+). In terms of biological role, GTPase component of the eRF1-eRF3-GTP ternary complex, a ternary complex that mediates translation termination in response to the termination codons UAA, UAG and UGA. GSPT2/ERF3B mediates ETF1/ERF1 delivery to stop codons: The eRF1-eRF3-GTP complex binds to a stop codon in the ribosomal A-site. GTP hydrolysis by GSPT2/ERF3B induces a conformational change that leads to its dissociation, permitting ETF1/ERF1 to accommodate fully in the A-site. Component of the transient SURF complex which recruits UPF1 to stalled ribosomes in the context of nonsense-mediated decay (NMD) of mRNAs containing premature stop codons. This Homo sapiens (Human) protein is Eukaryotic peptide chain release factor GTP-binding subunit ERF3B (GSPT2).